The sequence spans 270 residues: Cerberus (270 aa).

Positions 1 to 20 (MLLNVLRICIIVCLVNDGAG) are cleaved as a signal peptide. Asn103, Asn112, and Asn154 each carry an N-linked (GlcNAc...) asparagine glycan. 4 disulfides stabilise this stretch: Cys169-Cys215, Cys183-Cys229, Cys193-Cys245, and Cys197-Cys247. The CTCK domain occupies 169–253 (CKTLPFTQNI…ECTCEAHKSN (85 aa)). Asn228 carries N-linked (GlcNAc...) asparagine glycosylation.

The protein belongs to the DAN family. As to quaternary structure, the long chain interacts with nodal/nr-1, bmp4 and wnt8, thereby inhibiting their function. The short chain interacts with nodal/nr-1 but not bmp4 or wnt8. As to expression, a component of the Nieuwkoop signaling center in the blastula. Expressed transiently in a broad anterior domain of the gastrula, including the anterior endoderm of the Spemann's organizer and more laterally the cardiac primordia. Expression is excluded from the prospective prechordal plate region and the ring of cells that give rise to the trunk-tail mesoderm.

The protein resides in the secreted. Inhibits wnt, nodal/nr-1 and bmp signaling in the embryo to promote head formation and anterior neural induction. Within the endoderm, acts as an essential mediator of nodal/nr-1-induced cardiogenesis in the overlying mesoderm. This chain is Cerberus, found in Xenopus laevis (African clawed frog).